Reading from the N-terminus, the 422-residue chain is Glucuronoxylanase XynC (422 aa).

The first 32 residues, 1–32, serve as a signal peptide directing secretion; sequence MIPRIKKTICVLLVCFTMLSVMLGPGATEVLA. The active-site Proton donor is the Glu-171. Catalysis depends on Glu-260, which acts as the Nucleophile.

It belongs to the glycosyl hydrolase 30 family.

The protein localises to the secreted. It carries out the reaction Endohydrolysis of (1-&gt;4)-beta-D-xylosyl links in some glucuronoarabinoxylans.. It participates in glycan degradation; xylan degradation. Functionally, catalyzes the depolymerization of methylglucuronoxylan (MeGAXn) from different sources. It cleaves the beta-1,4-xylosidic bond penultimate to that linking carbon one of the xylose residue substituted with alpha-1,2-linked 4-O-methyl-D-glucuronate (MeGA). This chain is Glucuronoxylanase XynC (xynC), found in Bacillus subtilis (strain 168).